A 540-amino-acid chain; its full sequence is Phosphatidylinositol 4-phosphate 5-kinase type-1 beta (540 aa).

The segment at 1-21 (MSSAAENGEAAPGKQNEEKTY) is disordered. The region spanning 25 to 395 (ASSAIKGAIQ…RFLKFMNSRV (371 aa)) is the PIPK domain. Residues S445, S447, and S448 each carry the phosphoserine modification.

As to quaternary structure, interacts with RAC1, AJUBA, PLD1, PLD2 and ARF1. Detected in heart, pancreas, brain, kidney, skeletal muscle and lung.

The protein localises to the cytoplasm. It is found in the cytosol. It localises to the cell membrane. Its subcellular location is the endomembrane system. It carries out the reaction a 1,2-diacyl-sn-glycero-3-phospho-(1D-myo-inositol 4-phosphate) + ATP = a 1,2-diacyl-sn-glycero-3-phospho-(1D-myo-inositol-4,5-bisphosphate) + ADP + H(+). The catalysed reaction is 1-octadecanoyl-2-(5Z,8Z,11Z,14Z)-eicosatetraenoyl-sn-glycero-3-phospho-1D-myo-inositol 4-phosphate + ATP = 1-octadecanoyl-2-(5Z,8Z,11Z,14Z)-eicosatetraenoyl-sn-glycero-3-phospho-1D-myo-inositol 4,5-bisphosphate + ADP + H(+). The enzyme catalyses 1-octadecanoyl-2-(9Z)-octadecenoyl-sn-glycero-3-phospho-1D-myo-inositol 4-phosphate + ATP = 1-octadecanoyl-2-(9Z)-octadecenoyl-sn-glycero-3-phospho-1D-myo-inositol 4,5-bisphosphate + ADP + H(+). It catalyses the reaction 1-octadecanoyl-2-(9Z)-octadecenoyl-sn-glycero-3-phospho-1D-myo-inositol + ATP = 1-octadecanoyl-2-(9Z)-octadecenoyl-sn-glycero-3-phospho-1D-myo-inositol 5-phosphate + ADP + H(+). It carries out the reaction 1-octadecanoyl-2-(9Z,12Z)-octadecadienoyl-sn-glycero-3-phospho-1D-myo-inositol + ATP = 1-octadecanoyl-2-(9Z,12Z)-octadecadienoyl-sn-glycero-3-phospho-1D-myo-inositol 5-phosphate + ADP + H(+). The catalysed reaction is 1-octadecanoyl-2-(5Z,8Z,11Z,14Z-eicosatetraenoyl)-sn-glycero-3-phospho-(1D-myo-inositol) + ATP = 1-octadecanoyl-2-(5Z,8Z,11Z,14Z)-eicosatetraenoyl-sn-glycero-3-phospho-1D-myo-inositol 5-phosphate + ADP + H(+). The enzyme catalyses 1,2-di-(9Z,12Z)-octadecadienoyl-sn-glycero-3-phospho-1D-myo-inositol + ATP = 1,2-di(9Z,12Z)-octadecadienoyl-sn-glycero-3-phospho-1D-myo-inositol 5-phosphate + ADP + H(+). Functionally, catalyzes the phosphorylation of phosphatidylinositol 4-phosphate (PtdIns(4)P/PI4P) to form phosphatidylinositol 4,5-bisphosphate (PtdIns(4,5)P2/PIP2), a lipid second messenger that regulates several cellular processes such as signal transduction, vesicle trafficking, actin cytoskeleton dynamics, cell adhesion, and cell motility. PtdIns(4,5)P2 can directly act as a second messenger or can be utilized as a precursor to generate other second messengers: inositol 1,4,5-trisphosphate (IP3), diacylglycerol (DAG) or phosphatidylinositol-3,4,5-trisphosphate (PtdIns(3,4,5)P3/PIP3). Mediates RAC1-dependent reorganization of actin filaments. Contributes to the activation of phospholipase PLD2. Together with PIP5K1A, is required, after stimulation by G-protein coupled receptors, for the synthesis of IP3 that will induce stable platelet adhesion. In Homo sapiens (Human), this protein is Phosphatidylinositol 4-phosphate 5-kinase type-1 beta.